The sequence spans 110 residues: Thiosulfate sulfurtransferase GlpE (110 aa).

The region spanning 17 to 105 is the Rhodanese domain; sequence RENGAQVVDI…WRSVYPADTS (89 aa). The active-site Cysteine persulfide intermediate is the C65.

It belongs to the GlpE family.

The protein localises to the cytoplasm. It carries out the reaction thiosulfate + hydrogen cyanide = thiocyanate + sulfite + 2 H(+). The enzyme catalyses thiosulfate + [thioredoxin]-dithiol = [thioredoxin]-disulfide + hydrogen sulfide + sulfite + 2 H(+). Functionally, transferase that catalyzes the transfer of sulfur from thiosulfate to thiophilic acceptors such as cyanide or dithiols. May function in a CysM-independent thiosulfate assimilation pathway by catalyzing the conversion of thiosulfate to sulfite, which can then be used for L-cysteine biosynthesis. This chain is Thiosulfate sulfurtransferase GlpE, found in Pseudomonas aeruginosa (strain ATCC 15692 / DSM 22644 / CIP 104116 / JCM 14847 / LMG 12228 / 1C / PRS 101 / PAO1).